The following is a 581-amino-acid chain: NADH-quinone oxidoreductase subunit C/D (581 aa).

Positions 1 to 172 are NADH dehydrogenase I subunit C; that stretch reads MSGTDLVSEL…PLFNMTAALF (172 aa). Residues 196-581 form an NADH dehydrogenase I subunit D region; the sequence is ELMILNYGPH…IDYVMSDVDR (386 aa).

This sequence in the N-terminal section; belongs to the complex I 30 kDa subunit family. It in the C-terminal section; belongs to the complex I 49 kDa subunit family. As to quaternary structure, NDH-1 is composed of 13 different subunits. Subunits NuoB, CD, E, F, and G constitute the peripheral sector of the complex.

It localises to the cell inner membrane. It carries out the reaction a quinone + NADH + 5 H(+)(in) = a quinol + NAD(+) + 4 H(+)(out). Its function is as follows. NDH-1 shuttles electrons from NADH, via FMN and iron-sulfur (Fe-S) centers, to quinones in the respiratory chain. The immediate electron acceptor for the enzyme in this species is believed to be ubiquinone. Couples the redox reaction to proton translocation (for every two electrons transferred, four hydrogen ions are translocated across the cytoplasmic membrane), and thus conserves the redox energy in a proton gradient. This Rhodopseudomonas palustris (strain BisB5) protein is NADH-quinone oxidoreductase subunit C/D.